The following is a 655-amino-acid chain: UvrABC system protein C (655 aa).

Positions 16–95 constitute a GIY-YIG domain; sequence TDPGVYRFRD…IKEFAPRYNL (80 aa). Positions 207 to 242 constitute a UVR domain; it reads KRFIGTLEKQMAEAVAELDYERAARLRDDVIALRKV.

This sequence belongs to the UvrC family. In terms of assembly, interacts with UvrB in an incision complex.

The protein localises to the cytoplasm. Its function is as follows. The UvrABC repair system catalyzes the recognition and processing of DNA lesions. UvrC both incises the 5' and 3' sides of the lesion. The N-terminal half is responsible for the 3' incision and the C-terminal half is responsible for the 5' incision. This chain is UvrABC system protein C, found in Renibacterium salmoninarum (strain ATCC 33209 / DSM 20767 / JCM 11484 / NBRC 15589 / NCIMB 2235).